A 243-amino-acid chain; its full sequence is Ubiquinone/menaquinone biosynthesis C-methyltransferase UbiE (243 aa).

Residues T69, D90, and 116–117 (DA) contribute to the S-adenosyl-L-methionine site.

It belongs to the class I-like SAM-binding methyltransferase superfamily. MenG/UbiE family.

It carries out the reaction a 2-demethylmenaquinol + S-adenosyl-L-methionine = a menaquinol + S-adenosyl-L-homocysteine + H(+). The enzyme catalyses a 2-methoxy-6-(all-trans-polyprenyl)benzene-1,4-diol + S-adenosyl-L-methionine = a 5-methoxy-2-methyl-3-(all-trans-polyprenyl)benzene-1,4-diol + S-adenosyl-L-homocysteine + H(+). Its pathway is quinol/quinone metabolism; menaquinone biosynthesis; menaquinol from 1,4-dihydroxy-2-naphthoate: step 2/2. It participates in cofactor biosynthesis; ubiquinone biosynthesis. Functionally, methyltransferase required for the conversion of demethylmenaquinol (DMKH2) to menaquinol (MKH2) and the conversion of 2-polyprenyl-6-methoxy-1,4-benzoquinol (DDMQH2) to 2-polyprenyl-3-methyl-6-methoxy-1,4-benzoquinol (DMQH2). The protein is Ubiquinone/menaquinone biosynthesis C-methyltransferase UbiE of Cupriavidus pinatubonensis (strain JMP 134 / LMG 1197) (Cupriavidus necator (strain JMP 134)).